The chain runs to 217 residues: ATP-dependent Clp protease proteolytic subunit (217 aa).

Ser-121 serves as the catalytic Nucleophile. His-146 is an active-site residue.

The protein belongs to the peptidase S14 family. Fourteen ClpP subunits assemble into 2 heptameric rings which stack back to back to give a disk-like structure with a central cavity, resembling the structure of eukaryotic proteasomes.

Its subcellular location is the cytoplasm. It catalyses the reaction Hydrolysis of proteins to small peptides in the presence of ATP and magnesium. alpha-casein is the usual test substrate. In the absence of ATP, only oligopeptides shorter than five residues are hydrolyzed (such as succinyl-Leu-Tyr-|-NHMec, and Leu-Tyr-Leu-|-Tyr-Trp, in which cleavage of the -Tyr-|-Leu- and -Tyr-|-Trp bonds also occurs).. Functionally, cleaves peptides in various proteins in a process that requires ATP hydrolysis. Has a chymotrypsin-like activity. Plays a major role in the degradation of misfolded proteins. The polypeptide is ATP-dependent Clp protease proteolytic subunit (Burkholderia vietnamiensis (strain G4 / LMG 22486) (Burkholderia cepacia (strain R1808))).